A 219-amino-acid chain; its full sequence is Elongation factor Ts (219 aa).

Positions 82 to 85 (TDFV) are involved in Mg(2+) ion dislocation from EF-Tu.

The protein belongs to the EF-Ts family.

The protein resides in the cytoplasm. Its function is as follows. Associates with the EF-Tu.GDP complex and induces the exchange of GDP to GTP. It remains bound to the aminoacyl-tRNA.EF-Tu.GTP complex up to the GTP hydrolysis stage on the ribosome. This Anaeromyxobacter dehalogenans (strain 2CP-1 / ATCC BAA-258) protein is Elongation factor Ts.